The following is a 793-amino-acid chain: Peroxidase-like protein (793 aa).

The first 20 residues, 1 to 20 (MNLFICHVFLLLLHGYLIIC), serve as a signal peptide directing secretion.

This sequence belongs to the peroxidase family. As to expression, prismatic layer of shell (at protein level). Expressed primarily in the mantle with highest level in the mantle edge and lower level in the mantle pallium.

It is found in the secreted. This chain is Peroxidase-like protein, found in Margaritifera margaritifera (Freshwater pearl mussel).